The primary structure comprises 170 residues: Crossover junction endodeoxyribonuclease RuvC (170 aa).

Active-site residues include Asp11, Glu71, and Asp143. Residues Asp11, Glu71, and Asp143 each contribute to the Mg(2+) site.

Belongs to the RuvC family. As to quaternary structure, homodimer which binds Holliday junction (HJ) DNA. The HJ becomes 2-fold symmetrical on binding to RuvC with unstacked arms; it has a different conformation from HJ DNA in complex with RuvA. In the full resolvosome a probable DNA-RuvA(4)-RuvB(12)-RuvC(2) complex forms which resolves the HJ. Mg(2+) is required as a cofactor.

It localises to the cytoplasm. The enzyme catalyses Endonucleolytic cleavage at a junction such as a reciprocal single-stranded crossover between two homologous DNA duplexes (Holliday junction).. The RuvA-RuvB-RuvC complex processes Holliday junction (HJ) DNA during genetic recombination and DNA repair. Endonuclease that resolves HJ intermediates. Cleaves cruciform DNA by making single-stranded nicks across the HJ at symmetrical positions within the homologous arms, yielding a 5'-phosphate and a 3'-hydroxyl group; requires a central core of homology in the junction. The consensus cleavage sequence is 5'-(A/T)TT(C/G)-3'. Cleavage occurs on the 3'-side of the TT dinucleotide at the point of strand exchange. HJ branch migration catalyzed by RuvA-RuvB allows RuvC to scan DNA until it finds its consensus sequence, where it cleaves and resolves the cruciform DNA. This is Crossover junction endodeoxyribonuclease RuvC from Rhizobium rhizogenes (strain K84 / ATCC BAA-868) (Agrobacterium radiobacter).